The primary structure comprises 435 residues: MSIITDVYAREVLDSRGNPTLEVEVYTESGAFGRGMVPSGASTGEHEAVELRDGDKSRYNGLGTEKAVDNVNNIIAEAIIGYDVRDQQAIDRAMIALDGTPNKGKLGANAILGVSIAVARAAADYLEVPLYNYLGGFNTKVLPTPMMNIVNGGSHSDAPIAFQEFMIMPVGASTFKEALRWGAEVFHALKKILKERGLETAVGDEGGFAPKFEGTEDGVETILKAIEAAGYEAGENGIMIGFDCASSEFYDKERKVYDYTKFEGEGAAVRTSAEQIDYLEELVNKYPIITIEDGMDENDWDGWKALTERLGGRVQLVGDDFFVTNTDYLARGIKEEAANSILIKVNQIGTLTETFEAIEMAKEAGYTAVVSHRSGETEDSTIADIAVATNAGQIKTGSLSRTDRIAKYNQLLRIEDQLGEVAQYKGIKSFYNLKK.

Glutamine 163 is a (2R)-2-phosphoglycerate binding site. Glutamate 205 serves as the catalytic Proton donor. 3 residues coordinate Mg(2+): aspartate 243, glutamate 292, and aspartate 319. Residues lysine 344, arginine 373, serine 374, and lysine 395 each coordinate (2R)-2-phosphoglycerate. Residue lysine 344 is the Proton acceptor of the active site.

It belongs to the enolase family. The cofactor is Mg(2+).

It localises to the cytoplasm. It is found in the secreted. The protein localises to the cell surface. It catalyses the reaction (2R)-2-phosphoglycerate = phosphoenolpyruvate + H2O. It functions in the pathway carbohydrate degradation; glycolysis; pyruvate from D-glyceraldehyde 3-phosphate: step 4/5. In terms of biological role, catalyzes the reversible conversion of 2-phosphoglycerate (2-PG) into phosphoenolpyruvate (PEP). It is essential for the degradation of carbohydrates via glycolysis. The protein is Enolase of Streptococcus uberis (strain ATCC BAA-854 / 0140J).